Here is a 929-residue protein sequence, read N- to C-terminus: Band 3 anion transport protein (929 aa).

Position 1 is an N-acetylmethionine (methionine 1). The Cytoplasmic segment spans residues 1–422 (MGDMRDHEEV…LSDITDALSP (422 aa)). Serine 18 bears the Phosphoserine mark. Residues tyrosine 31 and tyrosine 56 each carry the phosphotyrosine modification. A disordered region spans residues 46–67 (ALPTEQTATDYVPSSTSTPHPS). Residues 58 to 67 (PSSTSTPHPS) are compositionally biased toward low complexity. The globular stretch occupies residues 69–303 (GQVYVELQEL…LGRAAATLMT (235 aa)). Positions 190–199 (AVLTRSGGAS) are interaction with ANK1. Serine 199, serine 222, and serine 363 each carry phosphoserine. Positions 317–370 (REELLRSLESFLDCSLVLPPTDAPSEKALLNLVPVQKELLRRRYLPSPAKPDPN) are dimerization arm. The interval 366-389 (KPDPNLYNTLDLNGGKGGPGDEDD) is disordered. Phosphotyrosine is present on tyrosine 372. The residue at position 374 (threonine 374) is a Phosphothreonine. The helical transmembrane segment at 423 to 446 (QVLAAVIFIYFAALSPAVTFGGLL) threads the bilayer. Residues 447 to 454 (GEKTRNLM) are Extracellular-facing. A helical membrane pass occupies residues 455–475 (GVSELLISTAVQGILFALLGA). Residues 476 to 478 (QPL) are Cytoplasmic-facing. The chain crosses the membrane as a discontinuously helical span at residues 479-495 (LVLGFSGPLLVFEEAFF). The Extracellular segment spans residues 496–504 (SFCESNNLE). Residues 505–525 (YIVGRAWIGFWLILLVMLVVA) form a helical membrane-spanning segment. Residues 526–537 (FEGSFLVQYISR) are Cytoplasmic-facing. A helical transmembrane segment spans residues 538–560 (YTQEIFSFLISLIFIYETFSKLI). The Extracellular portion of the chain corresponds to 561–588 (KIFQDYPLQQTYAPVVMKPKPQGPVPNT). The chain crosses the membrane as a helical span at residues 589 to 609 (ALFSLVLMAGTFLLAMTLRKF). Over 610–620 (KNSTYFPGKLR) the chain is Cytoplasmic. A helical membrane pass occupies residues 621-641 (RVIGDFGVPISILIMVLVDSF). Topologically, residues 642–681 (IKGTYTQKLSVPDGLKVSNSSARGWVIHPLGLYRLFPTWM) are extracellular. A glycan (N-linked (GlcNAc...) asparagine) is linked at asparagine 660. A helical transmembrane segment spans residues 682–702 (MFASVLPALLVFILIFLESQI). Residues 703–718 (TTLIVSKPERKMIKGS) are Cytoplasmic-facing. A helical transmembrane segment spans residues 719-737 (GFHLDLLLVVGMGGVAALF). Residues 738 to 755 (GMPWLSATTVRSVTHANA) traverse the membrane as a discontinuously helical segment. Over 756–778 (LTVMGKASGPGAAAQIQEVKEQR) the chain is Cytoplasmic. The next 2 helical transmembrane spans lie at 779–799 (ISGLLVSVLVGLSILMEPILS) and 800–818 (RIPLAVLFGIFLYMGVTSL). The Cytoplasmic portion of the chain corresponds to 819-856 (SGIQLFDRILLLFKPPKYHPDVPFVKRVKTWRMHLFTG). The segment at residues 857–887 (IQIICLAVLWVVKSTPASLALPFVLILTVPL) is an intramembrane region (discontinuously helical). Cysteine 861 carries the S-palmitoyl cysteine lipid modification. Residues 888–929 (RRLILPLIFRELELQCLDGDDAKVTFDEENGLDEYDEVPMPV) are Cytoplasmic-facing. At tyrosine 922 the chain carries Phosphotyrosine.

The protein belongs to the anion exchanger (TC 2.A.31) family. In terms of assembly, a dimer in solution, but in its membrane environment, it exists primarily as a mixture of dimers and tetramers and spans the membrane asymmetrically. Component of the ankyrin-1 complex in the erythrocyte, composed of ANK1, RHCE, RHAG, SLC4A1, EPB42, GYPA, GYPB and AQP1. Interacts with STOM; this interaction positively regulates SLC4A1 activity. Interacts with GYPA; a GYPA monomer is bound at each end of the SLC4A1 dimer forming a heterotetramer. Three SLC4A1 dimers (Band 3-I, Band 3-II and Band 3-III) participates in the ankyrin-1 complex. Interacts (via the cytoplasmic domain) with EPB42; this interaction is mediated by the SLC4A1 Band 3-I dimer. Interacts (via the cytoplasmic domain) directly with ANK1; this interaction is mediated by the SLC4A1 Band 3-II and Band 3-III dimers. Interacts with TMEM139. Detected in erythrocytes (at protein level).

It is found in the cell membrane. The protein localises to the basolateral cell membrane. The enzyme catalyses hydrogencarbonate(in) + chloride(out) = hydrogencarbonate(out) + chloride(in). Its function is as follows. Functions both as a transporter that mediates electroneutral anion exchange across the cell membrane and as a structural protein. Component of the ankyrin-1 complex of the erythrocyte membrane; required for normal flexibility and stability of the erythrocyte membrane and for normal erythrocyte shape via the interactions of its cytoplasmic domain with cytoskeletal proteins, glycolytic enzymes, and hemoglobin. Functions as a transporter that mediates the 1:1 exchange of inorganic anions across the erythrocyte membrane. Mediates chloride-bicarbonate exchange in the kidney, and is required for normal acidification of the urine. The protein is Band 3 anion transport protein of Mus musculus (Mouse).